A 547-amino-acid chain; its full sequence is Chaperonin GroEL 2 (547 aa).

ATP is bound by residues 30 to 33 (TLGP), lysine 51, 87 to 91 (DGTTT), glycine 415, 479 to 481 (NAA), and aspartate 495. The disordered stretch occupies residues 528-547 (KPATAGLPHGGPGGFGGPEF). Residues 535–547 (PHGGPGGFGGPEF) show a composition bias toward gly residues.

The protein belongs to the chaperonin (HSP60) family. Forms a cylinder of 14 subunits composed of two heptameric rings stacked back-to-back. Interacts with the co-chaperonin GroES.

Its subcellular location is the cytoplasm. The enzyme catalyses ATP + H2O + a folded polypeptide = ADP + phosphate + an unfolded polypeptide.. Its function is as follows. Together with its co-chaperonin GroES, plays an essential role in assisting protein folding. The GroEL-GroES system forms a nano-cage that allows encapsulation of the non-native substrate proteins and provides a physical environment optimized to promote and accelerate protein folding. This Azoarcus sp. (strain BH72) protein is Chaperonin GroEL 2.